The primary structure comprises 261 residues: Cytochrome c oxidase subunit 3 (261 aa).

At 1–15 the chain is on the mitochondrial matrix side; that stretch reads MVHQSHAYHMLKPSP. Residues 16 to 34 traverse the membrane as a helical segment; the sequence is WPLTGALSALLMTSGLAMW. Over 35–40 the chain is Mitochondrial intermembrane; the sequence is FHFHST. Residues 41–66 form a helical membrane-spanning segment; sequence TLLLTGMLTNALTMYQWWRDVVREST. Residues 67–72 are Mitochondrial matrix-facing; that stretch reads YQGHHT. The helical transmembrane segment at 73 to 105 threads the bilayer; sequence LPVQKGLRYGMILFITSEVFFFAGFFWAFYHSS. At 106–128 the chain is on the mitochondrial intermembrane side; sequence LAPTPQLGGHWPPTGITPLNPLE. A helical membrane pass occupies residues 129-152; sequence VPLLNTAVLLASGVSITWAHHSLM. The Mitochondrial matrix portion of the chain corresponds to 153–155; the sequence is ENN. Residues 156–183 form a helical membrane-spanning segment; it reads RTQMIQALLITILLGIYFTLLQASEYIE. Residues 184-190 are Mitochondrial intermembrane-facing; that stretch reads APFTISD. Residues 191–223 traverse the membrane as a helical segment; that stretch reads GIYGSTFFMTTGFHGLHVIIGSTFLTVCLSCQL. Residues 224 to 232 lie on the Mitochondrial matrix side of the membrane; the sequence is LFHFTSKHH. Residues 233-256 traverse the membrane as a helical segment; it reads FGFEAAAWYWHFVDVVWLFLYVSI. The Mitochondrial intermembrane segment spans residues 257 to 261; that stretch reads YWWGS.

The protein belongs to the cytochrome c oxidase subunit 3 family. In terms of assembly, component of the cytochrome c oxidase (complex IV, CIV), a multisubunit enzyme composed of 14 subunits. The complex is composed of a catalytic core of 3 subunits MT-CO1, MT-CO2 and MT-CO3, encoded in the mitochondrial DNA, and 11 supernumerary subunits COX4I, COX5A, COX5B, COX6A, COX6B, COX6C, COX7A, COX7B, COX7C, COX8 and NDUFA4, which are encoded in the nuclear genome. The complex exists as a monomer or a dimer and forms supercomplexes (SCs) in the inner mitochondrial membrane with NADH-ubiquinone oxidoreductase (complex I, CI) and ubiquinol-cytochrome c oxidoreductase (cytochrome b-c1 complex, complex III, CIII), resulting in different assemblies (supercomplex SCI(1)III(2)IV(1) and megacomplex MCI(2)III(2)IV(2)).

It localises to the mitochondrion inner membrane. The enzyme catalyses 4 Fe(II)-[cytochrome c] + O2 + 8 H(+)(in) = 4 Fe(III)-[cytochrome c] + 2 H2O + 4 H(+)(out). Its function is as follows. Component of the cytochrome c oxidase, the last enzyme in the mitochondrial electron transport chain which drives oxidative phosphorylation. The respiratory chain contains 3 multisubunit complexes succinate dehydrogenase (complex II, CII), ubiquinol-cytochrome c oxidoreductase (cytochrome b-c1 complex, complex III, CIII) and cytochrome c oxidase (complex IV, CIV), that cooperate to transfer electrons derived from NADH and succinate to molecular oxygen, creating an electrochemical gradient over the inner membrane that drives transmembrane transport and the ATP synthase. Cytochrome c oxidase is the component of the respiratory chain that catalyzes the reduction of oxygen to water. Electrons originating from reduced cytochrome c in the intermembrane space (IMS) are transferred via the dinuclear copper A center (CU(A)) of subunit 2 and heme A of subunit 1 to the active site in subunit 1, a binuclear center (BNC) formed by heme A3 and copper B (CU(B)). The BNC reduces molecular oxygen to 2 water molecules using 4 electrons from cytochrome c in the IMS and 4 protons from the mitochondrial matrix. The protein is Cytochrome c oxidase subunit 3 (MT-CO3) of Pongo pygmaeus (Bornean orangutan).